Reading from the N-terminus, the 41-residue chain is Large ribosomal subunit protein bL36 (41 aa).

Belongs to the bacterial ribosomal protein bL36 family.

This is Large ribosomal subunit protein bL36 from Stenotrophomonas maltophilia (strain R551-3).